Here is a 189-residue protein sequence, read N- to C-terminus: UPF0398 protein BH1768 (189 aa).

Belongs to the UPF0398 family.

This is UPF0398 protein BH1768 from Halalkalibacterium halodurans (strain ATCC BAA-125 / DSM 18197 / FERM 7344 / JCM 9153 / C-125) (Bacillus halodurans).